Here is a 320-residue protein sequence, read N- to C-terminus: Glycerol-3-phosphate dehydrogenase [NAD(P)+] (320 aa).

NADPH contacts are provided by Phe11, Arg30, and Lys102. Residues Lys102, Gly130, and Ser132 each coordinate sn-glycerol 3-phosphate. Residue Ala134 coordinates NADPH. Sn-glycerol 3-phosphate-binding residues include Lys185, Asp238, Ser248, Arg249, and Asn250. Residue Lys185 is the Proton acceptor of the active site. Residue Arg249 participates in NADPH binding. Glu270 serves as a coordination point for NADPH.

It belongs to the NAD-dependent glycerol-3-phosphate dehydrogenase family.

The protein resides in the cytoplasm. It catalyses the reaction sn-glycerol 3-phosphate + NAD(+) = dihydroxyacetone phosphate + NADH + H(+). The enzyme catalyses sn-glycerol 3-phosphate + NADP(+) = dihydroxyacetone phosphate + NADPH + H(+). It functions in the pathway membrane lipid metabolism; glycerophospholipid metabolism. Functionally, catalyzes the reduction of the glycolytic intermediate dihydroxyacetone phosphate (DHAP) to sn-glycerol 3-phosphate (G3P), the key precursor for phospholipid synthesis. This is Glycerol-3-phosphate dehydrogenase [NAD(P)+] from Roseobacter denitrificans (strain ATCC 33942 / OCh 114) (Erythrobacter sp. (strain OCh 114)).